Here is a 241-residue protein sequence, read N- to C-terminus: Triosephosphate isomerase (241 aa).

Substrate is bound at residue 9–11 (NWK). The active-site Electrophile is His96. Catalysis depends on Glu165, which acts as the Proton acceptor. Residues Gly171, Ser204, and 225-226 (GG) contribute to the substrate site.

It belongs to the triosephosphate isomerase family. Homodimer.

The protein localises to the cytoplasm. It carries out the reaction D-glyceraldehyde 3-phosphate = dihydroxyacetone phosphate. The protein operates within carbohydrate biosynthesis; gluconeogenesis. It functions in the pathway carbohydrate degradation; glycolysis; D-glyceraldehyde 3-phosphate from glycerone phosphate: step 1/1. In terms of biological role, involved in the gluconeogenesis. Catalyzes stereospecifically the conversion of dihydroxyacetone phosphate (DHAP) to D-glyceraldehyde-3-phosphate (G3P). The protein is Triosephosphate isomerase of Gloeothece citriformis (strain PCC 7424) (Cyanothece sp. (strain PCC 7424)).